The sequence spans 410 residues: Eukaryotic initiation factor 4A (410 aa).

A Q motif motif is present at residues 37–65 (ESFDSMGLQENLLRGIYAYGFEKPSAIQQ). In terms of domain architecture, Helicase ATP-binding spans 68–238 (IVPFCKGLDV…RKFMNKPVRI (171 aa)). 81–88 (AQSGTGKT) serves as a coordination point for ATP. A DEAD box motif is present at residues 186–189 (DEAD). Residues 249 to 410 (GIKQFYVNID…ELPANVADLL (162 aa)) enclose the Helicase C-terminal domain.

The protein belongs to the DEAD box helicase family. eIF4A subfamily. In terms of assembly, eIF4F is a multi-subunit complex, the composition of which varies with external and internal environmental conditions. It is composed of at least EIF4A, EIF4E and EIF4G.

The enzyme catalyses ATP + H2O = ADP + phosphate + H(+). In terms of biological role, ATP-dependent RNA helicase which is a subunit of the eIF4F complex involved in cap recognition and is required for mRNA binding to ribosome. In the current model of translation initiation, eIF4A unwinds RNA secondary structures in the 5'-UTR of mRNAs which is necessary to allow efficient binding of the small ribosomal subunit, and subsequent scanning for the initiator codon. This is Eukaryotic initiation factor 4A from Zea mays (Maize).